The sequence spans 918 residues: Nitrate reductase [NADH] (918 aa).

The tract at residues 25–44 is disordered; the sequence is KNGPNHRADSPVRGCNFPNS. Cysteine 195 serves as a coordination point for Mo-molybdopterin. The 76-residue stretch at 543–618 folds into the Cytochrome b5 heme-binding domain; sequence SNTYTLSEVK…LEDYRIGELI (76 aa). Heme is bound by residues histidine 578 and histidine 601. The 114-residue stretch at 661-774 folds into the FAD-binding FR-type domain; the sequence is NEKIPCKLIS…KGPLGHIEYT (114 aa). FAD contacts are provided by residues 714–717, 731–735, phenylalanine 736, phenylalanine 743, 748–750, and threonine 801; these read RAYT, VVKVY, and IMS.

It belongs to the nitrate reductase family. In terms of assembly, homodimer. Requires FAD as cofactor. Heme serves as cofactor. It depends on Mo-molybdopterin as a cofactor.

The catalysed reaction is nitrite + NAD(+) + H2O = nitrate + NADH + H(+). In terms of biological role, nitrate reductase is a key enzyme involved in the first step of nitrate assimilation in plants, fungi and bacteria. This is Nitrate reductase [NADH] from Cucurbita maxima (Pumpkin).